The sequence spans 419 residues: Phosphatidylinositol 5-phosphate 4-kinase type-2 gamma (419 aa).

The region spanning 46–418 (ASDPLISVFM…RFLEFVTNIF (373 aa)) is the PIPK domain. Over residues 299–310 (QEEEEDLEEDHT) the composition is skewed to acidic residues. The disordered stretch occupies residues 299–320 (QEEEEDLEEDHTENESSPHMNV).

Phosphorylated, phosphorylation is induced by EGF.

Its subcellular location is the endoplasmic reticulum. It is found in the cytoplasm. It catalyses the reaction a 1,2-diacyl-sn-glycero-3-phospho-(1D-myo-inositol-5-phosphate) + ATP = a 1,2-diacyl-sn-glycero-3-phospho-(1D-myo-inositol-4,5-bisphosphate) + ADP + H(+). The catalysed reaction is 1,2-dihexadecanoyl-sn-glycero-3-phospho-(1D-myo-inositol-5-phosphate) + ATP = 1,2-dihexadecanoyl-sn-glycero-3-phospho-(1D-myo-inositol-4,5-bisphosphate) + ADP + H(+). It carries out the reaction 1,2-dihexadecanoyl-sn-glycero-3-phospho-(1D-myo-inositol-5-phosphate) + GTP = 1,2-dihexadecanoyl-sn-glycero-3-phospho-(1D-myo-inositol-4,5-bisphosphate) + GDP + H(+). In terms of biological role, phosphatidylinositol 5-phosphate 4-kinase with low enzymatic activity. May be a GTP sensor, has higher GTP-dependent kinase activity than ATP-dependent kinase activity. The chain is Phosphatidylinositol 5-phosphate 4-kinase type-2 gamma (pip4k2c) from Xenopus tropicalis (Western clawed frog).